Reading from the N-terminus, the 256-residue chain is Probable ABC transporter ATP-binding protein SPy_0285/M5005_Spy0242 (256 aa).

Residues 4–246 (LEINNLHVSI…EKEGYAGIAQ (243 aa)) form the ABC transporter domain. 36 to 43 (GPNGTGKS) contributes to the ATP binding site.

The protein belongs to the ABC transporter superfamily. Ycf16 family.

The protein resides in the cell membrane. This chain is Probable ABC transporter ATP-binding protein SPy_0285/M5005_Spy0242, found in Streptococcus pyogenes serotype M1.